A 235-amino-acid polypeptide reads, in one-letter code: Enolase-phosphatase E1 (235 aa).

Mg(2+) is bound by residues Asp-10 and Glu-12. Residues 130 to 131 and Lys-169 contribute to the substrate site; that span reads SS. Residue Asp-194 participates in Mg(2+) binding.

The protein belongs to the HAD-like hydrolase superfamily. MasA/MtnC family. Monomer. The cofactor is Mg(2+).

It localises to the cytoplasm. The protein resides in the nucleus. It carries out the reaction 5-methylsulfanyl-2,3-dioxopentyl phosphate + H2O = 1,2-dihydroxy-5-(methylsulfanyl)pent-1-en-3-one + phosphate. Its pathway is amino-acid biosynthesis; L-methionine biosynthesis via salvage pathway; L-methionine from S-methyl-5-thio-alpha-D-ribose 1-phosphate: step 3/6. It functions in the pathway amino-acid biosynthesis; L-methionine biosynthesis via salvage pathway; L-methionine from S-methyl-5-thio-alpha-D-ribose 1-phosphate: step 4/6. Its function is as follows. Bifunctional enzyme that catalyzes the enolization of 2,3-diketo-5-methylthiopentyl-1-phosphate (DK-MTP-1-P) into the intermediate 2-hydroxy-3-keto-5-methylthiopentenyl-1-phosphate (HK-MTPenyl-1-P), which is then dephosphorylated to form the acireductone 1,2-dihydroxy-3-keto-5-methylthiopentene (DHK-MTPene). This is Enolase-phosphatase E1 from Komagataella phaffii (strain GS115 / ATCC 20864) (Yeast).